The primary structure comprises 150 residues: UPF0756 membrane protein ECA1265 (150 aa).

The next 4 membrane-spanning stretches (helical) occupy residues 1–21 (MAYIDPTLLILLVLAGLGIIS), 51–71 (YGLSIGIVVLTIGVMAPIASG), 82–102 (FLHWKSLLAILIGVAVSWLGG), and 127–147 (ALFRGVPVGPLIAAGLLSLLI).

The protein belongs to the UPF0756 family.

Its subcellular location is the cell membrane. The polypeptide is UPF0756 membrane protein ECA1265 (Pectobacterium atrosepticum (strain SCRI 1043 / ATCC BAA-672) (Erwinia carotovora subsp. atroseptica)).